Reading from the N-terminus, the 1255-residue chain is Membrane-associated guanylate kinase, WW and PDZ domain-containing protein 1 (1255 aa).

One can recognise a PDZ 1 domain in the interval 17–105 (ECTVKRGPQG…AVTFKAVRQG (89 aa)). A Guanylate kinase-like domain is found at 96–287 (AVTFKAVRQG…APITDPSQKF (192 aa)). Position 103–110 (103–110 (RQGGRLNK)) interacts with ATP. Disordered regions lie at residues 208-227 (HSLQ…SYND) and 235-265 (HTEN…TLQE). Residues 300-333 (GPLPENWEMAYTENGEVYFIDHNAKTTSWLDPRC) form the WW 1 domain. Phosphoserine is present on serine 357. In terms of domain architecture, WW 2 spans 359 to 392 (LELPAGWEKIEDPVYGVYYVDHINRKTQYENPVL). The disordered stretch occupies residues 395–462 (KRKRQLEQQQ…QGKPFFTRNP (68 aa)). A compositionally biased stretch (low complexity) spans 402–414 (QQQQQQQHQQQPQ). Residues 434–444 (PVAPSHPPSNP) show a composition bias toward pro residues. Residues 471–553 (HTKLRKSSRG…GASVDLELCR (83 aa)) form the PDZ 2 domain. Positions 585–601 (QETYDSPASHSSKTGKV) are enriched in polar residues. Disordered regions lie at residues 585–622 (QETY…SSHG) and 719–820 (QRGG…GERD). Residues 642 to 720 (TVHIVKGPMG…GSEVTLLVQR (79 aa)) form the PDZ 3 domain. A phosphoserine mark is found at serine 729 and serine 740. Residues 741-755 (QNSSQHSVSSLRSLH) show a composition bias toward low complexity. Serine 799 carries the phosphoserine modification. In terms of domain architecture, PDZ 4 spans 840-922 (DIFLWRKETG…QGHVNLTVRR (83 aa)). The tract at residues 932–984 (ENEVPSPASSHHSSNQPASLTEEKRTPQGSQNSLNTVSSGSGSTSGIGSGGGG) is disordered. 2 stretches are compositionally biased toward polar residues: residues 938–950 (PASS…QPAS) and 958–967 (PQGSQNSLNT). Gly residues predominate over residues 974–984 (STSGIGSGGGG). In terms of domain architecture, PDZ 5 spans 997 to 1093 (DVEIRRGENE…TVTLRIIPGD (97 aa)). Position 1070 is a phosphoserine (serine 1070). Polar residues predominate over residues 1111–1129 (TTTHAPSQQGTQETRTTTK). The disordered stretch occupies residues 1111 to 1142 (TTTHAPSQQGTQETRTTTKPKPDSQFEFKGPQ). One can recognise a PDZ 6 domain in the interval 1151 to 1233 (TVELERGAKG…RVRLFLRRGD (83 aa)).

As to quaternary structure, part of a complex composed of AMOTL2, MAGI1 and CDH5, within the complex AMOTL2 acts as a scaffold protein for the interaction of MAGI1 with CDH5. The complex is required for coupling actin fibers to cell junctions in endothelial cells. Interacts through its WW 2 domain with SYNPO and through its PDZ 5 domain with ACTN4. Interacts with cytoplasmic domain of ADGRB1. Interacts via its WW domains with DRPLA. Interacts with ESAM, LRP2 and CXADR. May interact with CTNNB1. Interacts through its PDZ 1 domain with NET1. Interacts with ASIC3 and AMOT. Interacts with FCHSD2. Interacts with IGSF5/JAM4 and through its PDZ 2 and 3 domains with NPHS1 forming a tripartite complex. Interacts with DDN. May interact (via PDZ domain) with RAPGEF2. Interacts with DLL1. Interacts with KCNJ10 and possibly with KCNJ10/KCNJ16 heterodimer; this interaction may facilitate KCNJ10/KCNJ16 potassium channel expression at the basolateral membrane in kidney tubular cells. Interacts with PRRG4 (via cytoplasmic domain).

Its subcellular location is the cell junction. It is found in the tight junction. The protein resides in the cytoplasm. The protein localises to the membrane. Functionally, plays a role in coupling actin fibers to cell junctions in endothelial cells, via its interaction with AMOTL2 and CDH5. May regulate acid-induced ASIC3 currents by modulating its expression at the cell surface. The protein is Membrane-associated guanylate kinase, WW and PDZ domain-containing protein 1 (Magi1) of Rattus norvegicus (Rat).